The sequence spans 625 residues: tRNA uridine 5-carboxymethylaminomethyl modification enzyme MnmG (625 aa).

FAD-binding positions include 13-18 (GGGHAG), V125, and S182. 276–290 (GPRYCPSIEDKITRF) is an NAD(+) binding site. Q373 is an FAD binding site.

It belongs to the MnmG family. As to quaternary structure, homodimer. Heterotetramer of two MnmE and two MnmG subunits. It depends on FAD as a cofactor.

Its subcellular location is the cytoplasm. In terms of biological role, NAD-binding protein involved in the addition of a carboxymethylaminomethyl (cmnm) group at the wobble position (U34) of certain tRNAs, forming tRNA-cmnm(5)s(2)U34. This is tRNA uridine 5-carboxymethylaminomethyl modification enzyme MnmG from Lactococcus lactis subsp. lactis (strain IL1403) (Streptococcus lactis).